Here is a 210-residue protein sequence, read N- to C-terminus: Vacuolar protein sorting-associated protein 2 homolog 3 (210 aa).

A disordered region spans residues 1-23; the sequence is MNIFTKKPNPREVLRESKREMTQ. Over residues 9-23 the composition is skewed to basic and acidic residues; sequence NPREVLRESKREMTQ. Residues 28–84 are a coiled coil; it reads IEKEIGSLQSEEKKLVLEIKRTAKSGNEGATKILARQLIRLRQQIANLQGSRAQMRG. Residues 178–200 form a disordered region; that stretch reads LSSAPKGKIGGKKAEDVGSSGID.

Belongs to the SNF7 family. In terms of assembly, component of the endosomal sorting required for transport complex III (ESCRT-III), composed at least of VPS2, VPS20, VPS24 and VPS32.

It is found in the endosome. Its function is as follows. Component of the ESCRT-III complex, which is required for multivesicular bodies (MVBs) formation and sorting of endosomal cargo proteins into MVBs. The ESCRT-III complex is probably involved in the concentration of MVB cargo. This is Vacuolar protein sorting-associated protein 2 homolog 3 (VPS2.3) from Arabidopsis thaliana (Mouse-ear cress).